Consider the following 416-residue polypeptide: Serine hydroxymethyltransferase (416 aa).

(6S)-5,6,7,8-tetrahydrofolate-binding positions include leucine 118 and 122 to 124; that span reads GHL. Lysine 226 is subject to N6-(pyridoxal phosphate)lysine. (6S)-5,6,7,8-tetrahydrofolate-binding positions include glutamate 242 and 350–352; that span reads SPF.

This sequence belongs to the SHMT family. In terms of assembly, homodimer. Pyridoxal 5'-phosphate is required as a cofactor.

It is found in the cytoplasm. The enzyme catalyses (6R)-5,10-methylene-5,6,7,8-tetrahydrofolate + glycine + H2O = (6S)-5,6,7,8-tetrahydrofolate + L-serine. Its pathway is one-carbon metabolism; tetrahydrofolate interconversion. It functions in the pathway amino-acid biosynthesis; glycine biosynthesis; glycine from L-serine: step 1/1. In terms of biological role, catalyzes the reversible interconversion of serine and glycine with tetrahydrofolate (THF) serving as the one-carbon carrier. This reaction serves as the major source of one-carbon groups required for the biosynthesis of purines, thymidylate, methionine, and other important biomolecules. Also exhibits THF-independent aldolase activity toward beta-hydroxyamino acids, producing glycine and aldehydes, via a retro-aldol mechanism. The polypeptide is Serine hydroxymethyltransferase (Helicobacter acinonychis (strain Sheeba)).